Reading from the N-terminus, the 101-residue chain is Small ribosomal subunit protein uS14 (101 aa).

This sequence belongs to the universal ribosomal protein uS14 family. Part of the 30S ribosomal subunit. Contacts proteins S3 and S10.

In terms of biological role, binds 16S rRNA, required for the assembly of 30S particles and may also be responsible for determining the conformation of the 16S rRNA at the A site. This chain is Small ribosomal subunit protein uS14, found in Wigglesworthia glossinidia brevipalpis.